A 350-amino-acid chain; its full sequence is Cephaeline 6'-O-methyltransferase CiOMT (350 aa).

S-adenosyl-L-methionine is bound by residues Gly193, Asp216, Asp236, Met237, and Lys250. His254 functions as the Proton acceptor in the catalytic mechanism.

It belongs to the class I-like SAM-binding methyltransferase superfamily. Cation-independent O-methyltransferase family.

The protein resides in the cytoplasm. It localises to the cytosol. It catalyses the reaction 7'-O-demethylcephaeline + S-adenosyl-L-methionine = cephaeline + S-adenosyl-L-homocysteine + H(+). The catalysed reaction is cephaeline + S-adenosyl-L-methionine = emetine + S-adenosyl-L-homocysteine + H(+). It functions in the pathway alkaloid biosynthesis. Its activity is regulated as follows. Inhibited by Co(2+), Ni(2+), Zn(2+) and Mn(2+) ions. Its function is as follows. O-methyltransferase involved in the biosynthesis of ipecac and benzylisoquinoline monoterpenoid-isoquinoline alkaloids natural products, starting by the condensation of dopamine and secologanin, and including emetine and cephaeline, drugs used both as anti-protozoal (e.g. treatment of ameobiasis) and as emetic agents. Catalyzes successively the 7'-O-methylation of 7'-O-demethylcephaeline to produce cephaeline, and its 6'-O-methylation to produce emetine. The protein is Cephaeline 6'-O-methyltransferase CiOMT of Carapichea ipecacuanha (Ipecac).